A 335-amino-acid chain; its full sequence is GTPase Obg (335 aa).

Residues 1-159 (MKFVDSASIR…REIGLELSIM (159 aa)) form the Obg domain. An OBG-type G domain is found at 160-332 (ADIGLLGMPN…LVAGLFKLVK (173 aa)). GTP contacts are provided by residues 166-173 (GMPNAGKS), 191-195 (FTTLH), 212-215 (DIPG), 282-285 (NKMD), and 313-315 (SAL). The Mg(2+) site is built by S173 and T193.

The protein belongs to the TRAFAC class OBG-HflX-like GTPase superfamily. OBG GTPase family. In terms of assembly, monomer. It depends on Mg(2+) as a cofactor.

The protein resides in the cytoplasm. An essential GTPase which binds GTP, GDP and possibly (p)ppGpp with moderate affinity, with high nucleotide exchange rates and a fairly low GTP hydrolysis rate. Plays a role in control of the cell cycle, stress response, ribosome biogenesis and in those bacteria that undergo differentiation, in morphogenesis control. This chain is GTPase Obg, found in Ruthia magnifica subsp. Calyptogena magnifica.